Consider the following 435-residue polypeptide: Gamma-glutamyl phosphate reductase (435 aa).

It belongs to the gamma-glutamyl phosphate reductase family.

Its subcellular location is the cytoplasm. The enzyme catalyses L-glutamate 5-semialdehyde + phosphate + NADP(+) = L-glutamyl 5-phosphate + NADPH + H(+). It participates in amino-acid biosynthesis; L-proline biosynthesis; L-glutamate 5-semialdehyde from L-glutamate: step 2/2. Catalyzes the NADPH-dependent reduction of L-glutamate 5-phosphate into L-glutamate 5-semialdehyde and phosphate. The product spontaneously undergoes cyclization to form 1-pyrroline-5-carboxylate. The sequence is that of Gamma-glutamyl phosphate reductase from Bradyrhizobium diazoefficiens (strain JCM 10833 / BCRC 13528 / IAM 13628 / NBRC 14792 / USDA 110).